Reading from the N-terminus, the 432-residue chain is 3-phosphoshikimate 1-carboxyvinyltransferase (432 aa).

Positions 23, 24, and 28 each coordinate 3-phosphoshikimate. Lys23 lines the phosphoenolpyruvate pocket. Residues Gly96 and Arg125 each contribute to the phosphoenolpyruvate site. The 3-phosphoshikimate site is built by Ser170, Gln172, Asp318, and Lys345. Gln172 is a binding site for phosphoenolpyruvate. Asp318 (proton acceptor) is an active-site residue. Residues Arg349 and Arg391 each coordinate phosphoenolpyruvate.

This sequence belongs to the EPSP synthase family. In terms of assembly, monomer.

The protein resides in the cytoplasm. It carries out the reaction 3-phosphoshikimate + phosphoenolpyruvate = 5-O-(1-carboxyvinyl)-3-phosphoshikimate + phosphate. The protein operates within metabolic intermediate biosynthesis; chorismate biosynthesis; chorismate from D-erythrose 4-phosphate and phosphoenolpyruvate: step 6/7. Functionally, catalyzes the transfer of the enolpyruvyl moiety of phosphoenolpyruvate (PEP) to the 5-hydroxyl of shikimate-3-phosphate (S3P) to produce enolpyruvyl shikimate-3-phosphate and inorganic phosphate. This chain is 3-phosphoshikimate 1-carboxyvinyltransferase, found in Gloeobacter violaceus (strain ATCC 29082 / PCC 7421).